Reading from the N-terminus, the 153-residue chain is Ribosome maturation factor RimP (153 aa).

This sequence belongs to the RimP family.

The protein resides in the cytoplasm. Required for maturation of 30S ribosomal subunits. In Histophilus somni (strain 2336) (Haemophilus somnus), this protein is Ribosome maturation factor RimP.